Reading from the N-terminus, the 331-residue chain is Probable 5-dehydro-4-deoxyglucarate dehydratase 2 (331 aa).

The disordered stretch occupies residues 1–23 (MSADTDTDTDTGTGTGPDTDTGT). Residues 10–23 (DTGTGTGPDTDTGT) are compositionally biased toward low complexity.

This sequence belongs to the DapA family.

The enzyme catalyses 5-dehydro-4-deoxy-D-glucarate + H(+) = 2,5-dioxopentanoate + CO2 + H2O. Its pathway is carbohydrate acid metabolism; D-glucarate degradation; 2,5-dioxopentanoate from D-glucarate: step 2/2. This chain is Probable 5-dehydro-4-deoxyglucarate dehydratase 2, found in Streptomyces avermitilis (strain ATCC 31267 / DSM 46492 / JCM 5070 / NBRC 14893 / NCIMB 12804 / NRRL 8165 / MA-4680).